An 876-amino-acid chain; its full sequence is Dynein regulatory complex subunit 7 (876 aa).

Coiled coils occupy residues 1 to 33 (MEVLREKVEEEEEAEREEAAERAERTEKLERVT) and 258 to 295 (KFEQEQEEKRIQEIKDLEQRRLKEEEDRILEAEKAKPD). The segment at 1–40 (MEVLREKVEEEEEAEREEAAERAERTEKLERVTKSAEVSR) is disordered. Basic and acidic residues predominate over residues 17-40 (EEAAERAERTEKLERVTKSAEVSR). Residues 385–412 (SLTEEDEEGLDDDDDDVEDLGKEEEDKS) form a disordered region. Positions 387–407 (TEEDEEGLDDDDDDVEDLGKE) are enriched in acidic residues. Coiled coils occupy residues 679–710 (QLKNEEKLSRHQAWESELEVLEILKLREEEEE) and 784–809 (QRLIDKANLIQARFEKETQELQKKQQ).

Belongs to the DRC7 family. As to quaternary structure, component of the nexin-dynein regulatory complex (N-DRC). Interacts with TCTE1/DRC5. Interacts with DRC3 and GAS8/DRC4. As to expression, expressed in diplotene and pachytene spermytocytes, and in round and elongating spermatids (at protein level). Strongly expressed in spleen and testis, faintly expressed in kidney, ovary and thymus. Abundantly expressed in the testis and is weakly expressed in the brain, thymus, lung and ovary. Expressed in ciliated cells.

Its subcellular location is the cell projection. The protein localises to the cilium. It localises to the flagellum. The protein resides in the cytoplasm. It is found in the cytoskeleton. Its subcellular location is the cilium axoneme. The protein localises to the flagellum axoneme. Its function is as follows. Component of the nexin-dynein regulatory complex (N-DRC) a key regulator of ciliary/flagellar motility which maintains the alignment and integrity of the distal axoneme and regulates microtubule sliding in motile axonemes. Essential for male fertility, sperm head morphogenesis and sperm flagellum formation. Not required for ciliogenesis in the brain and trachea. The sequence is that of Dynein regulatory complex subunit 7 (Drc7) from Mus musculus (Mouse).